The primary structure comprises 136 residues: Large ribosomal subunit protein uL16 (136 aa).

It belongs to the universal ribosomal protein uL16 family. As to quaternary structure, part of the 50S ribosomal subunit.

Functionally, binds 23S rRNA and is also seen to make contacts with the A and possibly P site tRNAs. This is Large ribosomal subunit protein uL16 from Shewanella sediminis (strain HAW-EB3).